Reading from the N-terminus, the 123-residue chain is Late histone H2B.L1 (123 aa).

The segment covering 1–10 has biased composition (low complexity); sequence MPAKAQPAGK. Residues 1–33 form a disordered region; sequence MPAKAQPAGKKGSKKAKAPRPSGGKKRRRRRKE. Residues 11 to 32 show a composition bias toward basic residues; sequence KGSKKAKAPRPSGGKKRRRRRK. O-linked (GlcNAc) serine glycosylation occurs at S110. K118 is covalently cross-linked (Glycyl lysine isopeptide (Lys-Gly) (interchain with G-Cter in ubiquitin)).

It belongs to the histone H2B family. The nucleosome is a histone octamer containing two molecules each of H2A, H2B, H3 and H4 assembled in one H3-H4 heterotetramer and two H2A-H2B heterodimers. The octamer wraps approximately 147 bp of DNA. Post-translationally, monoubiquitination of Lys-118 gives a specific tag for epigenetic transcriptional activation and is also prerequisite for histone H3 'Lys-4' and 'Lys-79' methylation. In terms of processing, glcNAcylation at Ser-110 promotes monoubiquitination of Lys-118. It fluctuates in response to extracellular glucose, and associates with transcribed genes.

It is found in the nucleus. The protein localises to the chromosome. Its function is as follows. Core component of nucleosome. Nucleosomes wrap and compact DNA into chromatin, limiting DNA accessibility to the cellular machineries which require DNA as a template. Histones thereby play a central role in transcription regulation, DNA repair, DNA replication and chromosomal stability. DNA accessibility is regulated via a complex set of post-translational modifications of histones, also called histone code, and nucleosome remodeling. The protein is Late histone H2B.L1 of Strongylocentrotus purpuratus (Purple sea urchin).